We begin with the raw amino-acid sequence, 675 residues long: Rho guanine nucleotide exchange factor 37 (675 aa).

The interval 1–26 is disordered; that stretch reads MAKHGADEPSSRSGSPDREGRASEDR. Residues 30–213 form the DH domain; it reads HQRLAVRELI…QDVNTNINEY (184 aa). The 202-residue stretch at 254–455 folds into the BAR domain; sequence LKQEAGLIPR…LPHHHVPEPA (202 aa). SH3 domains are found at residues 506-569 and 602-665; these read GPGK…LYHV and PTMN…RARS.

Its function is as follows. May act as a guanine nucleotide exchange factor (GEF). The protein is Rho guanine nucleotide exchange factor 37 (ARHGEF37) of Homo sapiens (Human).